The sequence spans 219 residues: 7-cyano-7-deazaguanine synthase (219 aa).

Residue phenylalanine 11–leucine 21 coordinates ATP. Positions 188, 196, 199, and 202 each coordinate Zn(2+).

This sequence belongs to the QueC family. It depends on Zn(2+) as a cofactor.

It carries out the reaction 7-carboxy-7-deazaguanine + NH4(+) + ATP = 7-cyano-7-deazaguanine + ADP + phosphate + H2O + H(+). It participates in purine metabolism; 7-cyano-7-deazaguanine biosynthesis. Functionally, catalyzes the ATP-dependent conversion of 7-carboxy-7-deazaguanine (CDG) to 7-cyano-7-deazaguanine (preQ(0)). The chain is 7-cyano-7-deazaguanine synthase from Glaesserella parasuis serovar 5 (strain SH0165) (Haemophilus parasuis).